Here is a 520-residue protein sequence, read N- to C-terminus: Succinyl-CoA:3-ketoacid coenzyme A transferase 2A, mitochondrial (520 aa).

A mitochondrion-targeting transit peptide spans 1-39 (MAALRLLAWALPRGVSALRPPPALPHRLIRRYVSDRSGS). Residues 280-299 (ERLTTRDSKPAPGSKDNDPS) form a disordered region. Glu-342 functions as the 5-glutamyl coenzyme A thioester intermediate in the catalytic mechanism.

The protein belongs to the 3-oxoacid CoA-transferase family. As to quaternary structure, homodimer.

Its subcellular location is the mitochondrion. The enzyme catalyses a 3-oxo acid + succinyl-CoA = a 3-oxoacyl-CoA + succinate. Its pathway is ketone metabolism; succinyl-CoA degradation; acetoacetyl-CoA from succinyl-CoA: step 1/1. Its function is as follows. Key enzyme for ketone body catabolism. Transfers the CoA moiety from succinate to acetoacetate. Formation of the enzyme-CoA intermediate proceeds via an unstable anhydride species formed between the carboxylate groups of the enzyme and substrate. Probably play and important roles in the energy metabolism of spermatozoa. The sequence is that of Succinyl-CoA:3-ketoacid coenzyme A transferase 2A, mitochondrial (Oxct2a) from Mus musculus (Mouse).